The following is a 553-amino-acid chain: MRSDTIKKGVERTPHRALIKGTGVPQSQMDKPFIGVATSFTDLIPGHVGMRDLERFIEKGIHSGGGYAFFFGIPGVCDGISMGHKGMHYSLPTRELIADMVESVAEAHRLDGLVLLTNCDKITPGMLMAAARLNIPSIVVTAGPMMAGRGTEGRRYSFVTDTFEAMARYKAGVIDERELGVCEDNACPGMGSCQGLFTANTMAILTETMGMSLPRCGTALAVSALKRRIAFASGEKIVDLVRNDITPRQILTRDAFENAIRVDLALGGSSNTVLHLLAIAREAGVDLPLETFDTLAKETPQISSMNPAGEYFMEDLDAGGGVMGVLRQLGSLVRDNPTVMGLSTLQLASTVESVDERVIRPLSNPVKKEGGIAVLFGNLAPKGAVVKQSGVSDAMMTFEGTARCFDSEEAAMAALMGGRIVAGDVVVIRYEGPKGGPGMREMLAPTATLMGLGLGDSVALITDGRFSGGTRGPCIGHISPEAAEGGPIALVEEGDRILLDIPNRRLELLVDEAVLQERRARWTAPEPKIKTGWLARYAKVVTSAYTGAVTSAD.

A Mg(2+)-binding site is contributed by Asp78. Residue Cys119 participates in [2Fe-2S] cluster binding. Residues Asp120 and Lys121 each coordinate Mg(2+). Residue Lys121 is modified to N6-carboxylysine. [2Fe-2S] cluster is bound at residue Cys193. Glu441 serves as a coordination point for Mg(2+). Ser467 (proton acceptor) is an active-site residue.

It belongs to the IlvD/Edd family. In terms of assembly, homodimer. [2Fe-2S] cluster is required as a cofactor. It depends on Mg(2+) as a cofactor.

The catalysed reaction is (2R)-2,3-dihydroxy-3-methylbutanoate = 3-methyl-2-oxobutanoate + H2O. It carries out the reaction (2R,3R)-2,3-dihydroxy-3-methylpentanoate = (S)-3-methyl-2-oxopentanoate + H2O. It functions in the pathway amino-acid biosynthesis; L-isoleucine biosynthesis; L-isoleucine from 2-oxobutanoate: step 3/4. It participates in amino-acid biosynthesis; L-valine biosynthesis; L-valine from pyruvate: step 3/4. Functionally, functions in the biosynthesis of branched-chain amino acids. Catalyzes the dehydration of (2R,3R)-2,3-dihydroxy-3-methylpentanoate (2,3-dihydroxy-3-methylvalerate) into 2-oxo-3-methylpentanoate (2-oxo-3-methylvalerate) and of (2R)-2,3-dihydroxy-3-methylbutanoate (2,3-dihydroxyisovalerate) into 2-oxo-3-methylbutanoate (2-oxoisovalerate), the penultimate precursor to L-isoleucine and L-valine, respectively. This Geobacter sulfurreducens (strain ATCC 51573 / DSM 12127 / PCA) protein is Dihydroxy-acid dehydratase.